We begin with the raw amino-acid sequence, 361 residues long: Phosphoserine aminotransferase (361 aa).

Position 42 (R42) interacts with L-glutamate. Pyridoxal 5'-phosphate-binding positions include 76–77 (AR), W102, T153, D173, and Q196. At K197 the chain carries N6-(pyridoxal phosphate)lysine. 238-239 (NT) lines the pyridoxal 5'-phosphate pocket.

This sequence belongs to the class-V pyridoxal-phosphate-dependent aminotransferase family. SerC subfamily. As to quaternary structure, homodimer. It depends on pyridoxal 5'-phosphate as a cofactor.

The protein resides in the cytoplasm. It carries out the reaction O-phospho-L-serine + 2-oxoglutarate = 3-phosphooxypyruvate + L-glutamate. The catalysed reaction is 4-(phosphooxy)-L-threonine + 2-oxoglutarate = (R)-3-hydroxy-2-oxo-4-phosphooxybutanoate + L-glutamate. The protein operates within amino-acid biosynthesis; L-serine biosynthesis; L-serine from 3-phospho-D-glycerate: step 2/3. It functions in the pathway cofactor biosynthesis; pyridoxine 5'-phosphate biosynthesis; pyridoxine 5'-phosphate from D-erythrose 4-phosphate: step 3/5. Functionally, catalyzes the reversible conversion of 3-phosphohydroxypyruvate to phosphoserine and of 3-hydroxy-2-oxo-4-phosphonooxybutanoate to phosphohydroxythreonine. This is Phosphoserine aminotransferase from Buchnera aphidicola subsp. Schizaphis graminum (strain Sg).